Here is a 246-residue protein sequence, read N- to C-terminus: MLLIPAIDLKDGQCVRLRQGAMDDATIFSDDPVKVAAHWRDQGARRLHLVDLNGAFAGKPKNLAVIRDILGEVGEDMPVQLGGGIRDLDTIEAYLDMGLAYVIIGTAAVKTPGFLHDACDAFPGQVIVGLDAKDGMVAIDGWAKITNHNVIDLAKRFEDYGVNSVIYTDIGRDGMMTGVNIEATVKLAQALTIPVIASGGLTNLDDIRALCAVEDEGIEGAITGRAIYEGSIDFAAAQTLADELAG.

Asp-8 (proton acceptor) is an active-site residue. Catalysis depends on Asp-131, which acts as the Proton donor.

This sequence belongs to the HisA/HisF family.

The protein localises to the cytoplasm. The catalysed reaction is 1-(5-phospho-beta-D-ribosyl)-5-[(5-phospho-beta-D-ribosylamino)methylideneamino]imidazole-4-carboxamide = 5-[(5-phospho-1-deoxy-D-ribulos-1-ylimino)methylamino]-1-(5-phospho-beta-D-ribosyl)imidazole-4-carboxamide. It functions in the pathway amino-acid biosynthesis; L-histidine biosynthesis; L-histidine from 5-phospho-alpha-D-ribose 1-diphosphate: step 4/9. The protein is 1-(5-phosphoribosyl)-5-[(5-phosphoribosylamino)methylideneamino] imidazole-4-carboxamide isomerase of Chromobacterium violaceum (strain ATCC 12472 / DSM 30191 / JCM 1249 / CCUG 213 / NBRC 12614 / NCIMB 9131 / NCTC 9757 / MK).